A 219-amino-acid chain; its full sequence is 7-cyano-7-deazaguanine synthase (219 aa).

10–20 contributes to the ATP binding site; that stretch reads FSGGQDSTTCL. 4 residues coordinate Zn(2+): cysteine 188, cysteine 196, cysteine 199, and cysteine 202.

It belongs to the QueC family. Requires Zn(2+) as cofactor.

The enzyme catalyses 7-carboxy-7-deazaguanine + NH4(+) + ATP = 7-cyano-7-deazaguanine + ADP + phosphate + H2O + H(+). It functions in the pathway purine metabolism; 7-cyano-7-deazaguanine biosynthesis. In terms of biological role, catalyzes the ATP-dependent conversion of 7-carboxy-7-deazaguanine (CDG) to 7-cyano-7-deazaguanine (preQ(0)). The sequence is that of 7-cyano-7-deazaguanine synthase from Neisseria meningitidis serogroup C / serotype 2a (strain ATCC 700532 / DSM 15464 / FAM18).